We begin with the raw amino-acid sequence, 390 residues long: MVRLPRKFKRVLLLVVLLTLVVFVRFKKQYIPTISVFEGSLIDNRDTLSYFNISNLEPSERSEWLPNKRVNAAFVTLARNEDLNDLLKSIRKLEKTFNHKYHYGWVFLNNEEFSDEFKEHVIEAVSGKCEFGLVPQEQWSIPEYIDQDKMHENWKKLQELGILYADKESYRHMCRFESGFFYRHPLVQKYEYYWRVEPSVDFFCDLDFDPFAYMKENNKAYAFTITVTEYSETIPSLWPSTKEFIKMHPNALHPNNALNFISNDDGETYNGCHFWTNFEIAKVDFWESEVYSKYFDYLDKSGNFFYERWGDAPVHSIAVSLFADRDNIHFFNEIGYWHPGSGHCPLDDATRAKCDCDPYESIDYNGWSCLDKFYTAFEMPFPENWSFYSH.

Glu-279 serves as the catalytic Nucleophile.

Belongs to the glycosyltransferase 15 family.

Its subcellular location is the endoplasmic reticulum. It localises to the golgi apparatus. Functionally, mannosyltransferase involved in O-glycosylation of cell wall and secreted proteins. Plays a major role in extending alpha-1,2-linked mannose in the O-glycan pathway. This chain is O-glycoside alpha-1,2-mannosyltransferase omh1 (omh1), found in Schizosaccharomyces pombe (strain 972 / ATCC 24843) (Fission yeast).